The sequence spans 413 residues: Protein trichome birefringence-like 9 (413 aa).

The chain crosses the membrane as a helical; Signal-anchor for type II membrane protein span at residues Leu22 to Met42. The short motif at Gly141–Ser143 is the GDS motif element. The DCXHWCLPGXXDXWN motif motif lies at Asp384–Asn398.

It belongs to the PC-esterase family. TBL subfamily.

Its subcellular location is the membrane. Its function is as follows. May act as a bridging protein that binds pectin and other cell wall polysaccharides. Probably involved in maintaining esterification of pectins. May be involved in the specific O-acetylation of cell wall polymers. The chain is Protein trichome birefringence-like 9 (TBL9) from Arabidopsis thaliana (Mouse-ear cress).